A 476-amino-acid polypeptide reads, in one-letter code: MGIKFLEVIKPFCVILPEIQKPERKIQFKEKVLWTAITLFIFLVCCQIPLFGIMSSDSADPFYWMRVILASNRGTLMELGISPIVTSGLIMQLLAGAKIIEVGDTPKDRALFNGAQKLFGMTITIGQSIVYVMTGMYGDPSEMGAGVCLLITIQLFVAGLIVLLLDELLQKGYGLGSGISLFIATNICETIVWKAFSPTTVNTGRGMEFEGAIIALFHLLATRTDKVRALREAFYRQNLPNLMNLIATIFVFAVVIYFQGFRVDLPIKSARYRGQYNTYPIKLFYTSNIPIILQSALVSNLYVISQMLSARFSGNLLVSLLGTWSDTSSGGPARAYPVGGLCYYLSPPESFGSVLEDPVHAVVYIVFMLGSCAFFSKTWIEVSGSSAKDVAKQLKEQQMVMRGHRETSMVHELNRYIPTAAAFGGLCIGALSVLADFLGAIGSGTGILLAVTIIYQYFEIFVKEQSEVGSMGALLF.

Topologically, residues 1–33 (MGIKFLEVIKPFCVILPEIQKPERKIQFKEKVL) are cytoplasmic. A helical membrane pass occupies residues 34–53 (WTAITLFIFLVCCQIPLFGI). Over 54-76 (MSSDSADPFYWMRVILASNRGTL) the chain is Lumenal. Residues 77–96 (MELGISPIVTSGLIMQLLAG) form a helical membrane-spanning segment. At 97 to 117 (AKIIEVGDTPKDRALFNGAQK) the chain is on the cytoplasmic side. Residues 118–138 (LFGMTITIGQSIVYVMTGMYG) traverse the membrane as a helical segment. The Lumenal segment spans residues 139–144 (DPSEMG). Residues 145–165 (AGVCLLITIQLFVAGLIVLLL) form a helical membrane-spanning segment. Over 166–172 (DELLQKG) the chain is Cytoplasmic. Residues 173–193 (YGLGSGISLFIATNICETIVW) traverse the membrane as a helical segment. The Lumenal portion of the chain corresponds to 194–240 (KAFSPTTVNTGRGMEFEGAIIALFHLLATRTDKVRALREAFYRQNLP). A helical membrane pass occupies residues 241-261 (NLMNLIATIFVFAVVIYFQGF). Topologically, residues 262–288 (RVDLPIKSARYRGQYNTYPIKLFYTSN) are cytoplasmic. A helical transmembrane segment spans residues 289–309 (IPIILQSALVSNLYVISQMLS). Topologically, residues 310 to 354 (ARFSGNLLVSLLGTWSDTSSGGPARAYPVGGLCYYLSPPESFGSV) are lumenal. A helical membrane pass occupies residues 355-375 (LEDPVHAVVYIVFMLGSCAFF). The Cytoplasmic segment spans residues 376 to 420 (SKTWIEVSGSSAKDVAKQLKEQQMVMRGHRETSMVHELNRYIPTA). A helical membrane pass occupies residues 421-441 (AAFGGLCIGALSVLADFLGAI). Residues 442–445 (GSGT) lie on the Lumenal side of the membrane. A helical transmembrane segment spans residues 446-462 (GILLAVTIIYQYFEIFV). Topologically, residues 463–476 (KEQSEVGSMGALLF) are cytoplasmic.

Belongs to the SecY/SEC61-alpha family. As to quaternary structure, the SEC61 channel-forming translocon complex consists of channel-forming core components SEC61A1, SEC61B and SEC61G and different auxiliary components such as SEC62 and SEC63. The SEC61 channel associates with the multi-pass translocon (MPT) complex.

It is found in the endoplasmic reticulum membrane. Component of SEC61 channel-forming translocon complex that mediates transport of signal peptide-containing precursor polypeptides across the endoplasmic reticulum (ER). Forms a ribosome receptor and a gated pore in the ER membrane, both functions required for cotranslational translocation of nascent polypeptides. May cooperate with auxiliary protein SEC62, SEC63 and HSPA5/BiP to enable post-translational transport of small presecretory proteins. The SEC61 channel is also involved in ER membrane insertion of transmembrane proteins: it mediates membrane insertion of the first few transmembrane segments of proteins, while insertion of subsequent transmembrane regions of multi-pass membrane proteins is mediated by the multi-pass translocon (MPT) complex. The SEC61 channel cooperates with the translocating protein TRAM1 to import nascent proteins into the ER. Controls the passive efflux of calcium ions from the ER lumen to the cytosol through SEC61 channel, contributing to the maintenance of cellular calcium homeostasis. Plays a critical role in nephrogenesis, specifically at pronephros stage. In Bos taurus (Bovine), this protein is Protein transport protein Sec61 subunit alpha isoform 1 (SEC61A1).